The primary structure comprises 184 residues: Putative manganese efflux pump MntP (184 aa).

Transmembrane regions (helical) follow at residues 12-32 (SIMA…MGMI), 39-59 (IIYI…FGML), 63-83 (LLSG…LLVL), 99-119 (FIAP…LDSF), 132-152 (VWMT…LGLL), and 164-184 (YSGA…LFPL).

Belongs to the MntP (TC 9.B.29) family.

The protein localises to the cell membrane. In terms of biological role, probably functions as a manganese efflux pump. The sequence is that of Putative manganese efflux pump MntP from Bacillus pumilus (strain SAFR-032).